The primary structure comprises 263 residues: 4-hydroxy-tetrahydrodipicolinate reductase (263 aa).

10 to 15 is an NAD(+) binding site; that stretch reads GASGKM. NADP(+) is bound at residue R38. NAD(+)-binding positions include 97–99 and 123–126; these read GTT and APNF. H153 functions as the Proton donor/acceptor in the catalytic mechanism. H154 serves as a coordination point for (S)-2,3,4,5-tetrahydrodipicolinate. The active-site Proton donor is K157. 163–164 provides a ligand contact to (S)-2,3,4,5-tetrahydrodipicolinate; the sequence is GT.

Belongs to the DapB family.

The protein localises to the cytoplasm. The catalysed reaction is (S)-2,3,4,5-tetrahydrodipicolinate + NAD(+) + H2O = (2S,4S)-4-hydroxy-2,3,4,5-tetrahydrodipicolinate + NADH + H(+). It carries out the reaction (S)-2,3,4,5-tetrahydrodipicolinate + NADP(+) + H2O = (2S,4S)-4-hydroxy-2,3,4,5-tetrahydrodipicolinate + NADPH + H(+). The protein operates within amino-acid biosynthesis; L-lysine biosynthesis via DAP pathway; (S)-tetrahydrodipicolinate from L-aspartate: step 4/4. Functionally, catalyzes the conversion of 4-hydroxy-tetrahydrodipicolinate (HTPA) to tetrahydrodipicolinate. The protein is 4-hydroxy-tetrahydrodipicolinate reductase of Dehalococcoides mccartyi (strain ATCC BAA-2100 / JCM 16839 / KCTC 5957 / BAV1).